A 175-amino-acid chain; its full sequence is Ribosome maturation factor RimM (175 aa).

A PRC barrel domain is found at 99-171; the sequence is AGEYYWFQLK…RILFDLPDGL (73 aa).

This sequence belongs to the RimM family. In terms of assembly, binds ribosomal protein uS19.

Its subcellular location is the cytoplasm. Its function is as follows. An accessory protein needed during the final step in the assembly of 30S ribosomal subunit, possibly for assembly of the head region. Essential for efficient processing of 16S rRNA. May be needed both before and after RbfA during the maturation of 16S rRNA. It has affinity for free ribosomal 30S subunits but not for 70S ribosomes. This is Ribosome maturation factor RimM from Syntrophotalea carbinolica (strain DSM 2380 / NBRC 103641 / GraBd1) (Pelobacter carbinolicus).